A 607-amino-acid chain; its full sequence is Glutamine--fructose-6-phosphate aminotransferase [isomerizing] (607 aa).

Cysteine 2 (nucleophile; for GATase activity) is an active-site residue. The Glutamine amidotransferase type-2 domain occupies 2-217 (CGIIGIIGND…DGDWAVLTRN (216 aa)). 2 SIS domains span residues 283-422 (IGID…ARGA) and 455-597 (VCHD…VDQP). The active-site For Fru-6P isomerization activity is the lysine 602.

In terms of assembly, homodimer.

It localises to the cytoplasm. The enzyme catalyses D-fructose 6-phosphate + L-glutamine = D-glucosamine 6-phosphate + L-glutamate. Catalyzes the first step in hexosamine metabolism, converting fructose-6P into glucosamine-6P using glutamine as a nitrogen source. In Brucella abortus biovar 1 (strain 9-941), this protein is Glutamine--fructose-6-phosphate aminotransferase [isomerizing].